Reading from the N-terminus, the 182-residue chain is Ribosome-recycling factor (182 aa).

This sequence belongs to the RRF family.

Its subcellular location is the cytoplasm. Functionally, responsible for the release of ribosomes from messenger RNA at the termination of protein biosynthesis. May increase the efficiency of translation by recycling ribosomes from one round of translation to another. The sequence is that of Ribosome-recycling factor from Cyanothece sp. (strain PCC 7425 / ATCC 29141).